The chain runs to 953 residues: Protein translocase subunit SecA 1 (953 aa).

ATP contacts are provided by residues Gln83, 101–105 (GEGKT), and Asp490. Over residues 854–867 (AAAAAAKASDSAAK) the composition is skewed to low complexity. The segment at 854 to 953 (AAAAAAKASD…DRPAKSHRKG (100 aa)) is disordered. A compositionally biased stretch (basic and acidic residues) spans 929-947 (SRRERREAARKQAKADRPA).

This sequence belongs to the SecA family. As to quaternary structure, monomer and homodimer. Part of the essential Sec protein translocation apparatus which comprises SecA, SecYEG and auxiliary proteins SecDF. Other proteins may also be involved.

The protein resides in the cell membrane. It is found in the cytoplasm. The enzyme catalyses ATP + H2O + cellular proteinSide 1 = ADP + phosphate + cellular proteinSide 2.. Part of the Sec protein translocase complex. Interacts with the SecYEG preprotein conducting channel. Has a central role in coupling the hydrolysis of ATP to the transfer of proteins into and across the cell membrane, serving as an ATP-driven molecular motor driving the stepwise translocation of polypeptide chains across the membrane. In Mycolicibacterium smegmatis (strain ATCC 700084 / mc(2)155) (Mycobacterium smegmatis), this protein is Protein translocase subunit SecA 1.